The following is a 250-amino-acid chain: 2,3-bisphosphoglycerate-dependent phosphoglycerate mutase (250 aa).

Substrate is bound by residues 10 to 17 (RHGESQWN), 23 to 24 (TG), Arg-62, 89 to 92 (ERHY), Lys-100, 116 to 117 (RR), and 185 to 186 (GN). The active-site Tele-phosphohistidine intermediate is His-11. Glu-89 serves as the catalytic Proton donor/acceptor.

The protein belongs to the phosphoglycerate mutase family. BPG-dependent PGAM subfamily. Homodimer.

It catalyses the reaction (2R)-2-phosphoglycerate = (2R)-3-phosphoglycerate. The protein operates within carbohydrate degradation; glycolysis; pyruvate from D-glyceraldehyde 3-phosphate: step 3/5. In terms of biological role, catalyzes the interconversion of 2-phosphoglycerate and 3-phosphoglycerate. In Citrobacter koseri (strain ATCC BAA-895 / CDC 4225-83 / SGSC4696), this protein is 2,3-bisphosphoglycerate-dependent phosphoglycerate mutase.